A 648-amino-acid polypeptide reads, in one-letter code: Threonine--tRNA ligase (648 aa).

Positions 1–61 (MITITFPDGA…EEDGSIEIIT (61 aa)) constitute a TGS domain. Residues 242-540 (DHRKLGKELD…LIETYKGAFP (299 aa)) are catalytic. The Zn(2+) site is built by Cys336, His387, and His517.

It belongs to the class-II aminoacyl-tRNA synthetase family. Homodimer. The cofactor is Zn(2+).

It is found in the cytoplasm. The enzyme catalyses tRNA(Thr) + L-threonine + ATP = L-threonyl-tRNA(Thr) + AMP + diphosphate + H(+). Functionally, catalyzes the attachment of threonine to tRNA(Thr) in a two-step reaction: L-threonine is first activated by ATP to form Thr-AMP and then transferred to the acceptor end of tRNA(Thr). Also edits incorrectly charged L-seryl-tRNA(Thr). The protein is Threonine--tRNA ligase of Streptococcus equi subsp. zooepidemicus (strain H70).